Here is a 624-residue protein sequence, read N- to C-terminus: Probable pectinesterase/pectinesterase inhibitor 47 (624 aa).

The first 19 residues, 1–19, serve as a signal peptide directing secretion; sequence MQTHSSSLVFLALLCLSWA. The interval 24–88 is disordered; it reads PTRPPSQPPS…PSPLPPNIAC (65 aa). The span at 25–84 shows a compositional bias: pro residues; it reads TRPPSQPPSHPPIQPSSQPPTQPPSQPPTQPPTQPPSHPPTQPPTPPPSQSPSQPSPLPP. Positions 74-236 are pectinesterase inhibitor 47; sequence QSPSQPSPLP…TRLYSVSLGL (163 aa). N-linked (GlcNAc...) asparagine glycans are attached at residues Asn225, Asn330, Asn369, and Asn376. Residues 307 to 606 are pectinesterase 47; the sequence is AVTVGPYETD…FTVYNFTLGD (300 aa). Thr385 lines the substrate pocket. The N-linked (GlcNAc...) asparagine glycan is linked to Asn387. Gln415 is a binding site for substrate. The active-site Proton donor; for pectinesterase activity is Asp438. Cys452 and Cys472 are joined by a disulfide. Asp459 (nucleophile; for pectinesterase activity) is an active-site residue. Residue Asn505 is glycosylated (N-linked (GlcNAc...) asparagine). Arg527 and Trp529 together coordinate substrate. N-linked (GlcNAc...) asparagine glycosylation is found at Asn555, Asn596, and Asn601.

It in the N-terminal section; belongs to the PMEI family. This sequence in the C-terminal section; belongs to the pectinesterase family.

Its subcellular location is the secreted. It is found in the cell wall. The enzyme catalyses [(1-&gt;4)-alpha-D-galacturonosyl methyl ester](n) + n H2O = [(1-&gt;4)-alpha-D-galacturonosyl](n) + n methanol + n H(+). It functions in the pathway glycan metabolism; pectin degradation; 2-dehydro-3-deoxy-D-gluconate from pectin: step 1/5. Acts in the modification of cell walls via demethylesterification of cell wall pectin. The polypeptide is Probable pectinesterase/pectinesterase inhibitor 47 (PME47) (Arabidopsis thaliana (Mouse-ear cress)).